Reading from the N-terminus, the 357-residue chain is uncharacterized protein (357 aa).

3 consecutive transmembrane segments (helical) span residues 21–41 (FIKI…LFSW), 86–106 (FFCL…CTLF), and 135–155 (GGFV…PVIF). 2 disordered regions span residues 184-229 (DKNK…AMSD) and 283-357 (KAGS…NKRN). Over residues 195–223 (TTNTTNFSGNGSSSSTTNATSSSSSQANN) the composition is skewed to low complexity. Composition is skewed to basic and acidic residues over residues 305 to 314 (KIEEYDNQKQ) and 322 to 337 (KETN…EKET). The stretch at 305–337 (KIEEYDNQKQEEEENEEKETNKQQTQKDDEKET) forms a coiled coil. Positions 346–357 (KKSKKGKKNKRN) are enriched in basic residues.

It is found in the membrane. This is an uncharacterized protein from Dictyostelium discoideum (Social amoeba).